The sequence spans 426 residues: Glutamate-1-semialdehyde 2,1-aminomutase (426 aa).

Lys-265 carries the N6-(pyridoxal phosphate)lysine modification.

Belongs to the class-III pyridoxal-phosphate-dependent aminotransferase family. HemL subfamily. In terms of assembly, homodimer. Pyridoxal 5'-phosphate is required as a cofactor.

Its subcellular location is the cytoplasm. The catalysed reaction is (S)-4-amino-5-oxopentanoate = 5-aminolevulinate. It participates in porphyrin-containing compound metabolism; protoporphyrin-IX biosynthesis; 5-aminolevulinate from L-glutamyl-tRNA(Glu): step 2/2. This is Glutamate-1-semialdehyde 2,1-aminomutase from Salmonella gallinarum (strain 287/91 / NCTC 13346).